The following is a 148-amino-acid chain: Large ribosomal subunit protein bL9 (148 aa).

Belongs to the bacterial ribosomal protein bL9 family.

In terms of biological role, binds to the 23S rRNA. In Desulfitobacterium hafniense (strain DSM 10664 / DCB-2), this protein is Large ribosomal subunit protein bL9.